Reading from the N-terminus, the 328-residue chain is Transcription initiation factor IIB 4 (328 aa).

Basic and acidic residues-rich tracts occupy residues 1 to 12 and 21 to 32; these read MTNQRTTRDGSH and RSRESTDEDHGC. The disordered stretch occupies residues 1-47; sequence MTNQRTTRDGSHGTESVPTQRSRESTDEDHGCPECNGDLVTDEDRGE. The segment at 28–58 adopts a TFIIB-type zinc-finger fold; it reads EDHGCPECNGDLVTDEDRGETTCGECGLVVE. The Zn(2+) site is built by Cys32, Cys35, Cys50, and Cys53. 2 tandem repeats follow at residues 144–227 and 238–319.

Belongs to the TFIIB family.

In terms of biological role, stabilizes TBP binding to an archaeal box-A promoter. Also responsible for recruiting RNA polymerase II to the pre-initiation complex (DNA-TBP-TFIIB). The polypeptide is Transcription initiation factor IIB 4 (Halobacterium salinarum (strain ATCC 700922 / JCM 11081 / NRC-1) (Halobacterium halobium)).